A 352-amino-acid polypeptide reads, in one-letter code: Homeobox protein Mohawk (352 aa).

A disordered region spans residues 19–54 (GASERERGGRPYSGVLDSPHARPEVGIPDGPPLKDN). A DNA-binding region (homeobox; TALE-type) is located at residues 71-132 (VRHKRQALQD…NARRRLKNTV (62 aa)). Disordered regions lie at residues 159 to 189 (VSSD…VHHP) and 245 to 301 (TRQR…PSKD).

It belongs to the TALE/IRO homeobox family.

The protein localises to the nucleus. Its function is as follows. May act as a morphogenetic regulator of cell adhesion. The chain is Homeobox protein Mohawk (MKX) from Homo sapiens (Human).